A 326-amino-acid polypeptide reads, in one-letter code: Tagatose 1,6-diphosphate aldolase (326 aa).

It belongs to the aldolase LacD family.

The catalysed reaction is D-tagatofuranose 1,6-bisphosphate = D-glyceraldehyde 3-phosphate + dihydroxyacetone phosphate. Its pathway is carbohydrate metabolism; D-tagatose 6-phosphate degradation; D-glyceraldehyde 3-phosphate and glycerone phosphate from D-tagatose 6-phosphate: step 2/2. In Streptococcus pneumoniae serotype 4 (strain ATCC BAA-334 / TIGR4), this protein is Tagatose 1,6-diphosphate aldolase.